The following is a 3704-amino-acid chain: Fatty acid synthase 2 (3704 aa).

Residues 27-41 (AVSAHGSPPSSASPG) are compositionally biased toward low complexity. Positions 27 to 52 (AVSAHGSPPSSASPGPDDKAFSVDGT) are disordered. The acetyltransferase (AT) domain stretch occupies residues 216 to 475 (ALFGGQGNNH…QARIPFSKRK (260 aa)). The tract at residues 639–887 (SRLLGKPPIM…LIASTQGCSD (249 aa)) is enoyl reductase (ER) domain. A dehydratase (DH) domain region spans residues 1216–1709 (GEQPSWIRAL…VPGDQLSVQL (494 aa)). Positions 1624 to 1730 (PKTNEPYSRA…VQIDASNQRG (107 aa)) constitute a MaoC-like domain. Residues 1747–2112 (YVFTGQGSQA…IEHVSEVTRS (366 aa)) are malonyl/palmitoyl transferase (MT/PT) domain. One can recognise a Carrier domain in the interval 2265–2343 (DERLDPLLTV…AALRPGYSGE (79 aa)). The residue at position 2303 (Ser-2303) is an O-(pantetheine 4'-phosphoryl)serine. The interval 2733-2969 (GLDVLLTGVG…LGLVEPEFAS (237 aa)) is ketoreductase (KR) domain. Positions 3176–3623 (QQEIELTHDL…QVGGIAMILH (448 aa)) constitute a Ketosynthase family 3 (KS3) domain. Active-site for beta-ketoacyl synthase activity residues include Cys-3359, His-3506, and His-3547.

It in the N-terminal section; belongs to the fungal fatty acid synthetase subunit beta family. The protein in the C-terminal section; belongs to the thiolase-like superfamily. Fungal fatty acid synthetase subunit alpha family.

It participates in secondary metabolite biosynthesis. In terms of biological role, fatty acid synthase; part of the gene cluster that mediates the biosynthesis of the glycolipid biosurfactant ustilagic acid (UA). UA is a secreted cellobiose glycolipid that is toxic for many microorganisms and confers biocontrol activity to U.maydis. UA consists of 15,16-dihydroxypalmitic or 2,15,16-trihydroxypalmitic acid, which is O-glycosidically linked to cellobiose at its terminal hydroxyl group. In addition, the cellobiose moiety is acetylated and acylated with a short-chain hydroxy fatty acid. UA biosynthesis starts with omega-hydroxylation of palmitic acid catalyzed by the cytochrome P450 monooxygenase cyp1. Terminal hydroxylation of palmitic acid precedes subterminal hydroxylation catalyzed by the cytochrome P450 monooxygenase cyp2. Sequential glucosylation of the hydroxy fatty acid is probably catalyzed by the glycosyltransferase ugt1. The cellobiose lipid is further decorated by acetylation of the proximal glucose residue and by acylation with a short-chain beta-hydroxy fatty acid at the distal glucose residue. The acyltransferase uat1 may be a good candidate for catalyzing either acetylation or acylation of the cellobiose lipid. The fatty acid synthase fas2 may be involved in synthesis of the carbon backbone of the short-chain beta-hydroxy fatty acid esterified to the cellobiose disaccharide. The secreted UA consists of a mixture of both alpha-hydroxylated and non-hydroxylated glycolipids; therefore, alpha-hydroxylation of the long-chain fatty, catalyzed by the fatty acid hydroxylase ahd1, occurs late in UA biosynthesis and may be the last step before secretion. The polypeptide is Fatty acid synthase 2 (Mycosarcoma maydis (Corn smut fungus)).